The sequence spans 225 residues: Ribonuclease HII (225 aa).

The RNase H type-2 domain maps to 28-220; it reads DIIAGTDEVG…VKEYVDISQE (193 aa). Asp-34, Glu-35, and Asp-129 together coordinate a divalent metal cation.

This sequence belongs to the RNase HII family. Mn(2+) is required as a cofactor. Requires Mg(2+) as cofactor.

It is found in the cytoplasm. The enzyme catalyses Endonucleolytic cleavage to 5'-phosphomonoester.. Endonuclease that specifically degrades the RNA of RNA-DNA hybrids. In Desulfotalea psychrophila (strain LSv54 / DSM 12343), this protein is Ribonuclease HII.